The following is a 413-amino-acid chain: Probable isoleucine--tRNA ligase, mitochondrial (413 aa).

The short motif at 298–302 is the 'KMSKS' region element; sequence KMSKS. K301 is an ATP binding site.

The protein belongs to the class-I aminoacyl-tRNA synthetase family.

Its subcellular location is the mitochondrion matrix. The enzyme catalyses tRNA(Ile) + L-isoleucine + ATP = L-isoleucyl-tRNA(Ile) + AMP + diphosphate. The chain is Probable isoleucine--tRNA ligase, mitochondrial from Ciona intestinalis (Transparent sea squirt).